We begin with the raw amino-acid sequence, 385 residues long: Spindle pole component BBP1 (385 aa).

Ser29 is subject to Phosphoserine. Residues 34 to 48 are compositionally biased toward basic and acidic residues; it reads YKDQEERRDRSRYAQ. The segment at 34-76 is disordered; sequence YKDQEERRDRSRYAQDDTNFSMKFGNDSNRRSTNLSRSNSWSG. Residues 64 to 75 are compositionally biased toward low complexity; that stretch reads RSTNLSRSNSWS. Ser73 and Ser115 each carry phosphoserine. Residues 229 to 355 adopt a coiled-coil conformation; that stretch reads QMDLNSRDLE…KDMQRDNYES (127 aa).

This sequence belongs to the BBP1 family. As to quaternary structure, homodimer. Interacts with KAR1, MPS2 and SPC29.

The protein localises to the cytoplasm. The protein resides in the cytoskeleton. It is found in the microtubule organizing center. Its subcellular location is the spindle pole body. Functionally, component of the spindle pole body (SPB) required for insertion of the nascent SPB into the nuclear envelope and for the proper execution of spindle pole body (SPB) duplication. Connects the central plaque of the SPB with the half-bridge. Required for proper localization of CDC5 at the SPB and for proper M-phase progression. This chain is Spindle pole component BBP1 (BBP1), found in Saccharomyces cerevisiae (strain ATCC 204508 / S288c) (Baker's yeast).